Here is a 170-residue protein sequence, read N- to C-terminus: uncharacterized protein (170 aa).

Residues 1–26 (MLKKKWMVGLLAGCLAAGGFSYNAFA) form the signal peptide.

This is an uncharacterized protein from Bacillus subtilis (strain 168).